Reading from the N-terminus, the 129-residue chain is Small ribosomal subunit protein uS11 (129 aa).

This sequence belongs to the universal ribosomal protein uS11 family. In terms of assembly, part of the 30S ribosomal subunit. Interacts with proteins S7 and S18. Binds to IF-3.

Located on the platform of the 30S subunit, it bridges several disparate RNA helices of the 16S rRNA. Forms part of the Shine-Dalgarno cleft in the 70S ribosome. The protein is Small ribosomal subunit protein uS11 of Chelativorans sp. (strain BNC1).